A 150-amino-acid polypeptide reads, in one-letter code: Macrodomain Ter protein (150 aa).

This sequence belongs to the MatP family. As to quaternary structure, homodimer.

Its subcellular location is the cytoplasm. In terms of biological role, required for spatial organization of the terminus region of the chromosome (Ter macrodomain) during the cell cycle. Prevents early segregation of duplicated Ter macrodomains during cell division. Binds specifically to matS, which is a 13 bp signature motif repeated within the Ter macrodomain. The chain is Macrodomain Ter protein from Salmonella arizonae (strain ATCC BAA-731 / CDC346-86 / RSK2980).